A 1366-amino-acid chain; its full sequence is DNA-directed RNA polymerase subunit beta'' (1366 aa).

4 residues coordinate Zn(2+): Cys220, Cys291, Cys298, and Cys301.

The protein belongs to the RNA polymerase beta' chain family. RpoC2 subfamily. As to quaternary structure, in plastids the minimal PEP RNA polymerase catalytic core is composed of four subunits: alpha, beta, beta', and beta''. When a (nuclear-encoded) sigma factor is associated with the core the holoenzyme is formed, which can initiate transcription. Zn(2+) serves as cofactor.

It localises to the plastid. The protein localises to the chloroplast. The enzyme catalyses RNA(n) + a ribonucleoside 5'-triphosphate = RNA(n+1) + diphosphate. In terms of biological role, DNA-dependent RNA polymerase catalyzes the transcription of DNA into RNA using the four ribonucleoside triphosphates as substrates. This chain is DNA-directed RNA polymerase subunit beta'', found in Phaseolus vulgaris (Kidney bean).